The chain runs to 257 residues: Zinc transporter ZupT (257 aa).

The next 3 helical transmembrane spans lie at 5-25, 32-52, and 61-81; these read LILT…GVLG, LLAF…LMEM, and GMSP…YFGL. Fe(2+) is bound by residues Asn-120 and Glu-123. Zn(2+)-binding residues include Glu-123 and His-148. 4 consecutive transmembrane segments (helical) span residues 137 to 157, 171 to 191, 195 to 215, and 236 to 256; these read LGFG…LAVA, ILWA…AWLI, MISP…MVAL, and GVLC…TAGI. The Fe(2+) site is built by Asn-149, Glu-152, and Glu-181. Glu-152 provides a ligand contact to Zn(2+).

Belongs to the ZIP transporter (TC 2.A.5) family. ZupT subfamily.

The protein resides in the cell inner membrane. The enzyme catalyses Zn(2+)(in) = Zn(2+)(out). Its function is as follows. Mediates zinc uptake. May also transport other divalent cations. This Escherichia coli O7:K1 (strain IAI39 / ExPEC) protein is Zinc transporter ZupT.